A 285-amino-acid polypeptide reads, in one-letter code: Phosphatidylserine decarboxylase proenzyme (285 aa).

Catalysis depends on charge relay system; for autoendoproteolytic cleavage activity residues Asp89, His146, and Ser252. The Schiff-base intermediate with substrate; via pyruvic acid; for decarboxylase activity role is filled by Ser252. Ser252 carries the pyruvic acid (Ser); by autocatalysis modification.

It belongs to the phosphatidylserine decarboxylase family. PSD-B subfamily. Prokaryotic type I sub-subfamily. In terms of assembly, heterodimer of a large membrane-associated beta subunit and a small pyruvoyl-containing alpha subunit. Pyruvate serves as cofactor. In terms of processing, is synthesized initially as an inactive proenzyme. Formation of the active enzyme involves a self-maturation process in which the active site pyruvoyl group is generated from an internal serine residue via an autocatalytic post-translational modification. Two non-identical subunits are generated from the proenzyme in this reaction, and the pyruvate is formed at the N-terminus of the alpha chain, which is derived from the carboxyl end of the proenzyme. The autoendoproteolytic cleavage occurs by a canonical serine protease mechanism, in which the side chain hydroxyl group of the serine supplies its oxygen atom to form the C-terminus of the beta chain, while the remainder of the serine residue undergoes an oxidative deamination to produce ammonia and the pyruvoyl prosthetic group on the alpha chain. During this reaction, the Ser that is part of the protease active site of the proenzyme becomes the pyruvoyl prosthetic group, which constitutes an essential element of the active site of the mature decarboxylase.

It localises to the cell membrane. The enzyme catalyses a 1,2-diacyl-sn-glycero-3-phospho-L-serine + H(+) = a 1,2-diacyl-sn-glycero-3-phosphoethanolamine + CO2. It participates in phospholipid metabolism; phosphatidylethanolamine biosynthesis; phosphatidylethanolamine from CDP-diacylglycerol: step 2/2. In terms of biological role, catalyzes the formation of phosphatidylethanolamine (PtdEtn) from phosphatidylserine (PtdSer). The sequence is that of Phosphatidylserine decarboxylase proenzyme from Vibrio campbellii (strain ATCC BAA-1116).